A 501-amino-acid chain; its full sequence is Phase 2 flagellin (501 aa).

This sequence belongs to the bacterial flagellin family.

Its subcellular location is the secreted. It is found in the bacterial flagellum. Its function is as follows. Flagellin is the subunit protein which polymerizes to form the filaments of bacterial flagella. This Salmonella abortus-equi protein is Phase 2 flagellin (fljB).